We begin with the raw amino-acid sequence, 225 residues long: uncharacterized protein (225 aa).

A run of 6 helical transmembrane segments spans residues 25–45 (MMLALALIASFVSHFISIPFL), 57–77 (VFLIACAFFVSYSWALVITVA), 83–103 (FIWDGNNWIGILTLTIANFAI), 109–129 (LYFHIFAQIKLRWLWVFSLAT), 135–155 (LLTTLNGLLITPLYWYWFGYV), and 187–207 (IFALYSLFNVIKFTLVSLIGV).

It is found in the cell membrane. This is an uncharacterized protein from Mycoplasma pneumoniae (strain ATCC 29342 / M129 / Subtype 1) (Mycoplasmoides pneumoniae).